The chain runs to 4841 residues: Nonribosomal peptide synthetase 2 (4841 aa).

Residues 26–429 (VKPPNQNVAL…GRLSDGQVKL (404 aa)) are adenylation 1. Residues 531-604 (EPVDEFESSL…DIIFAARRQI (74 aa)) enclose the Carrier 1 domain. Ser-565 carries the post-translational modification O-(pantetheine 4'-phosphoryl)serine. The tract at residues 640 to 1042 (EEIIPCTPLQ…ILERPTQEIK (403 aa)) is condensation 1. The tract at residues 1072–1463 (FEDVVRKHPE…GRIDDQVKLR (392 aa)) is adenylation 2. Positions 1587–1665 (EGDWSRMDLV…QLAKHLEGKP (79 aa)) constitute a Carrier 2 domain. At Ser-1625 the chain carries O-(pantetheine 4'-phosphoryl)serine. The condensation 2 stretch occupies residues 1702–2043 (ILPCTPLQEA…QTVWELEADS (342 aa)). The region spanning 2139–2212 (SEVELDVRQV…KIAAKLLENR (74 aa)) is the Carrier 3 domain. O-(pantetheine 4'-phosphoryl)serine is present on Ser-2173. The segment at 2248 to 2663 (AVLPCTPLQS…NHLATEDEAF (416 aa)) is condensation 3. The tract at residues 2695–3090 (AAVHPNKLAL…GRADDQVKLR (396 aa)) is adenylation 3. One can recognise a Carrier 4 domain in the interval 3219–3293 (QDILVLLYDA…DLANCLAKAA (75 aa)). Ser-3253 bears the O-(pantetheine 4'-phosphoryl)serine mark. The interval 3333 to 3735 (IAPCSPLQEG…DLAAESPQSE (403 aa)) is condensation 4. Positions 3759-3838 (QNSFEWTSEA…KMITELASIT (80 aa)) constitute a Carrier 5 domain. Ser-3799 is modified (O-(pantetheine 4'-phosphoryl)serine). Residues 3873–4242 (SVLPPTHLQE…VEAEAVSDSL (370 aa)) are condensation 5. The region spanning 4318–4394 (IEWNQNEIGI…EMAQKADTKL (77 aa)) is the Carrier 6 domain. At Ser-4355 the chain carries O-(pantetheine 4'-phosphoryl)serine. Residues 4430 to 4726 (EVLPALPMQV…DIHLITSESR (297 aa)) form a condensation 6 region.

This sequence belongs to the NRP synthetase family.

The protein operates within siderophore biosynthesis. Functionally, nonribosomal peptide synthetase; part of the gene cluster that mediates the biosynthesis of hydroxamate-containing siderophores that play a critical role in virulence. Gibberella zeae produces extracellular coprogen-type siderophores as well as the intracellular siderophore ferricrocin. The role of extracellular siderophores is to supply iron to the fungus during plant infection, and the intracellular ferricrocin is required for intracellular iron distribution and storage with a crucial role in ascus and ascospore development. SID1 catalyzes the conversion of L-ornithine to N(5)-hydroxyornithine, the first step in the biosynthesis of all hydroxamate-containing siderophores. The assembly of extracellular coprogen-type siderophores is performed by the nonribosomal peptide synthetase (NRPS) NPS6 whereas the intracellular siderophore ferricrocin is assembled by NPS2. This chain is Nonribosomal peptide synthetase 2, found in Gibberella zeae (strain ATCC MYA-4620 / CBS 123657 / FGSC 9075 / NRRL 31084 / PH-1) (Wheat head blight fungus).